Consider the following 189-residue polypeptide: Pyridoxal 5'-phosphate synthase subunit PdxT (189 aa).

47-49 (GES) serves as a coordination point for L-glutamine. Cysteine 79 acts as the Nucleophile in catalysis. L-glutamine is bound by residues arginine 105 and 132–133 (IR). Active-site charge relay system residues include histidine 168 and glutamate 170.

It belongs to the glutaminase PdxT/SNO family. In the presence of PdxS, forms a dodecamer of heterodimers. Only shows activity in the heterodimer.

It catalyses the reaction aldehydo-D-ribose 5-phosphate + D-glyceraldehyde 3-phosphate + L-glutamine = pyridoxal 5'-phosphate + L-glutamate + phosphate + 3 H2O + H(+). It carries out the reaction L-glutamine + H2O = L-glutamate + NH4(+). Its pathway is cofactor biosynthesis; pyridoxal 5'-phosphate biosynthesis. In terms of biological role, catalyzes the hydrolysis of glutamine to glutamate and ammonia as part of the biosynthesis of pyridoxal 5'-phosphate. The resulting ammonia molecule is channeled to the active site of PdxS. In Methanocorpusculum labreanum (strain ATCC 43576 / DSM 4855 / Z), this protein is Pyridoxal 5'-phosphate synthase subunit PdxT.